The chain runs to 297 residues: Mycothiol acetyltransferase (297 aa).

N-acetyltransferase domains follow at residues Asp8–Pro153 and Val156–Leu297. Residue Glu36 participates in 1D-myo-inositol 2-(L-cysteinylamino)-2-deoxy-alpha-D-glucopyranoside binding. Residue Leu80–Val82 participates in acetyl-CoA binding. Residues Glu183, Lys223, and Glu231 each contribute to the 1D-myo-inositol 2-(L-cysteinylamino)-2-deoxy-alpha-D-glucopyranoside site. Acetyl-CoA is bound by residues Val235–Val237 and Gln242–Lys248. Tyr269 provides a ligand contact to 1D-myo-inositol 2-(L-cysteinylamino)-2-deoxy-alpha-D-glucopyranoside. Acetyl-CoA is bound at residue Asn274–Arg279.

This sequence belongs to the acetyltransferase family. MshD subfamily. Monomer.

It carries out the reaction 1D-myo-inositol 2-(L-cysteinylamino)-2-deoxy-alpha-D-glucopyranoside + acetyl-CoA = mycothiol + CoA + H(+). Catalyzes the transfer of acetyl from acetyl-CoA to desacetylmycothiol (Cys-GlcN-Ins) to form mycothiol. In Actinosynnema mirum (strain ATCC 29888 / DSM 43827 / JCM 3225 / NBRC 14064 / NCIMB 13271 / NRRL B-12336 / IMRU 3971 / 101), this protein is Mycothiol acetyltransferase.